The chain runs to 259 residues: Chloroplastic group IIB intron splicing facilitator CRS2, chloroplastic (259 aa).

Residues 1–21 (MSLAVATPASARLSPLTTSSP) are disordered. The N-terminal 49 residues, 1 to 49 (MSLAVATPASARLSPLTTSSPEPCRRRRLLLSAAAPLRRTRLRRRIAVV), are a transit peptide targeting the chloroplast. Y77 contacts tRNA. H82 acts as the Proton acceptor in catalysis. TRNA is bound by residues Y127, N129, and N175.

Belongs to the PTH family. CRS2 subfamily. As to quaternary structure, part of large ribonucleo-protein complexes that include group IIB introns and either CAF1 or CAF2.

The protein localises to the plastid. It is found in the chloroplast stroma. Its function is as follows. Required for the splicing of group IIB introns in chloroplasts. This chain is Chloroplastic group IIB intron splicing facilitator CRS2, chloroplastic, found in Oryza sativa subsp. japonica (Rice).